The sequence spans 329 residues: AUGMIN subunit 7 (329 aa).

A coiled-coil region spans residues 169–197 (DVSELETKLSEQAKILSNLQQKVDDLAAK).

In terms of assembly, part of the augmin complex composed of 8 subunits. The complex acts on microtubules and interacts with gamma-tubulin in spindles and the phragmoplast.

It is found in the cytoplasm. It localises to the cytoskeleton. The protein resides in the spindle. Its subcellular location is the phragmoplast. Contributes to the assembly of the acentrosomal spindle and phragmoplast microtubule arrays as part of the augmin complex. Regulates the association of gamma-tubulin with the spindle and phragmoplast microtubules. This is AUGMIN subunit 7 from Arabidopsis thaliana (Mouse-ear cress).